A 325-amino-acid chain; its full sequence is Mitochondrial thiamine pyrophosphate carrier 1 (325 aa).

3 Solcar repeats span residues 12 to 111 (GSRL…TTLL), 122 to 209 (PPSA…LRPH), and 216 to 312 (PFSS…ALKF). Transmembrane regions (helical) follow at residues 17–35 (VTAA…IAPL), 92–108 (LLYV…YRTT), 127–143 (SFVA…AATY), 184–200 (VWDR…SFFF), 223–239 (VART…TFPL), and 287–304 (GLTV…VTMW).

The protein belongs to the mitochondrial carrier (TC 2.A.29) family.

It is found in the mitochondrion inner membrane. In terms of biological role, mitochondrial transporter that mediates uptake of thiamine pyrophosphate (ThPP) into mitochondria. This chain is Mitochondrial thiamine pyrophosphate carrier 1 (TPC1), found in Chaetomium globosum (strain ATCC 6205 / CBS 148.51 / DSM 1962 / NBRC 6347 / NRRL 1970) (Soil fungus).